We begin with the raw amino-acid sequence, 635 residues long: Sodium- and chloride-dependent creatine transporter 1 (635 aa).

A disordered region spans residues 1-28 (MAKKSAENGIYSVSGDEKKGPLIAPGPD). Topologically, residues 1–60 (MAKKSAENGIYSVSGDEKKGPLIAPGPDGAPAKGDGPVGLGTPGGRLAVPPRETWTRQMD) are cytoplasmic. Residue Thr-42 is modified to Phosphothreonine. The chain crosses the membrane as a helical span at residues 61–81 (FIMSCVGFAVGLGNVWRFPYL). Over 82 to 87 (CYKNGG) the chain is Extracellular. Residues 88–108 (GVFLIPYVLIALVGGIPIFFL) form a helical membrane-spanning segment. Residues 109–138 (EISLGQFMKAGSINVWNICPLFKGLGYASM) lie on the Cytoplasmic side of the membrane. The helical transmembrane segment at 139–159 (VIVFYCNTYYIMVLAWGFYYL) threads the bilayer. Topologically, residues 160–230 (VKSFTTTLPW…LSGGLEVPGA (71 aa)) are extracellular. 2 N-linked (GlcNAc...) asparagine glycosylation sites follow: Asn-192 and Asn-197. Residues 231–251 (LNWEVTLCLLACWVLVYFCVW) traverse the membrane as a helical segment. Over 252–269 (KGVKSTGKIVYFTATFPY) the chain is Cytoplasmic. Residues 270-290 (VVLVVLLVRGVLLPGALDGII) form a helical membrane-spanning segment. Residues 291 to 304 (YYLKPDWSKLGSPQ) are Extracellular-facing. A helical transmembrane segment spans residues 305–325 (VWIDAGTQIFFSYAIGLGALT). Residues 326 to 341 (ALGSYNRFNNNCYKDA) lie on the Cytoplasmic side of the membrane. The helical transmembrane segment at 342 to 362 (IILALINSGTSFFAGFVVFSI) threads the bilayer. The Extracellular segment spans residues 363 to 394 (LGFMAAEQGVHISKVAESGPGLAFIAYPRAVT). The chain crosses the membrane as a helical span at residues 395–415 (LMPVAPLWAALFFFMLLLLGL). At 416–444 (DSQFVGVEGFITGLLDLLPASYYFRFQRE) the chain is on the cytoplasmic side. Residues 445–465 (ISVALCCALCFVIDLSMVTDG) form a helical membrane-spanning segment. The Extracellular portion of the chain corresponds to 466–479 (GMYVFQLFDYYSAS). A helical membrane pass occupies residues 480–500 (GTTLLWQAFWECVVVAWVYGA). Residues 501–520 (DRFMDDIACMIGYRPCPWMK) lie on the Cytoplasmic side of the membrane. The chain crosses the membrane as a helical span at residues 521 to 541 (WCWSFFTPLVCMGIFIFNVVY). At 542 to 560 (YEPLVYNNTYVYPWWGEAM) the chain is on the extracellular side. Asn-548 is a glycosylation site (N-linked (GlcNAc...) asparagine). A helical transmembrane segment spans residues 561–581 (GWAFALSSMLCVPLHLLGCLL). The Cytoplasmic portion of the chain corresponds to 582 to 635 (RAKGTMAERWQHLTQPIWGLHHLEYRAQDADVRGLTTLTPVSESSKVVVVESVM). A phosphothreonine mark is found at Thr-617 and Thr-620. A Phosphoserine modification is found at Ser-623.

It belongs to the sodium:neurotransmitter symporter (SNF) (TC 2.A.22) family. SLC6A8 subfamily. Glycosylated. As to expression, predominantly expressed in skeletal muscle and kidney. Also found in brain, heart, colon, testis and prostate.

Its subcellular location is the cell membrane. The protein localises to the apical cell membrane. It carries out the reaction creatine(out) + chloride(out) + 2 Na(+)(out) = creatine(in) + chloride(in) + 2 Na(+)(in). In terms of biological role, creatine:sodium symporter which mediates the uptake of creatine. Plays an important role in supplying creatine to the brain via the blood-brain barrier. This chain is Sodium- and chloride-dependent creatine transporter 1 (SLC6A8), found in Homo sapiens (Human).